The primary structure comprises 266 residues: UPF0294 protein YafD (266 aa).

It belongs to the UPF0294 family.

It is found in the cytoplasm. The protein is UPF0294 protein YafD of Shigella dysenteriae serotype 1 (strain Sd197).